We begin with the raw amino-acid sequence, 195 residues long: Orotate phosphoribosyltransferase (195 aa).

Residues arginine 86, lysine 90, histidine 92, and 111–119 contribute to the 5-phospho-alpha-D-ribose 1-diphosphate site; that span reads DDVATTGVS. Residues threonine 115 and arginine 143 each contribute to the orotate site.

The protein belongs to the purine/pyrimidine phosphoribosyltransferase family. PyrE subfamily. As to quaternary structure, homodimer. Mg(2+) is required as a cofactor.

It catalyses the reaction orotidine 5'-phosphate + diphosphate = orotate + 5-phospho-alpha-D-ribose 1-diphosphate. It participates in pyrimidine metabolism; UMP biosynthesis via de novo pathway; UMP from orotate: step 1/2. In terms of biological role, catalyzes the transfer of a ribosyl phosphate group from 5-phosphoribose 1-diphosphate to orotate, leading to the formation of orotidine monophosphate (OMP). This Saccharolobus solfataricus (strain ATCC 35092 / DSM 1617 / JCM 11322 / P2) (Sulfolobus solfataricus) protein is Orotate phosphoribosyltransferase.